The primary structure comprises 37 residues: L-amino-acid oxidase (37 aa).

The protein belongs to the flavin monoamine oxidase family. FIG1 subfamily. As to quaternary structure, homodimer; non-covalently linked. FAD is required as a cofactor. N-Glycosylated. In terms of tissue distribution, expressed by the venom gland.

The protein resides in the secreted. The enzyme catalyses an L-alpha-amino acid + O2 + H2O = a 2-oxocarboxylate + H2O2 + NH4(+). The catalysed reaction is L-leucine + O2 + H2O = 4-methyl-2-oxopentanoate + H2O2 + NH4(+). It catalyses the reaction L-phenylalanine + O2 + H2O = 3-phenylpyruvate + H2O2 + NH4(+). It carries out the reaction L-tryptophan + O2 + H2O = indole-3-pyruvate + H2O2 + NH4(+). The enzyme catalyses L-methionine + O2 + H2O = 4-methylsulfanyl-2-oxobutanoate + H2O2 + NH4(+). The catalysed reaction is L-isoleucine + O2 + H2O = (S)-3-methyl-2-oxopentanoate + H2O2 + NH4(+). It catalyses the reaction L-arginine + O2 + H2O = 5-guanidino-2-oxopentanoate + H2O2 + NH4(+). It carries out the reaction L-histidine + O2 + H2O = 3-(imidazol-5-yl)pyruvate + H2O2 + NH4(+). The enzyme catalyses L-valine + O2 + H2O = 3-methyl-2-oxobutanoate + H2O2 + NH4(+). Functionally, catalyzes an oxidative deamination of predominantly hydrophobic and aromatic L-amino acids, thus producing hydrogen peroxide that may contribute to the diverse toxic effects of this enzyme. Is highly active on L-Leu, L-Met, moderately active on L-Arg, L-Trp, L-Phe, L-Val, L-His, and L-Ile, and is weakly or not active on L-Cys, L-Lys, L-Ala, L-Thr, L-Asp, L-Ser, and L-Pro. Exhibits diverse biological activities, such as hemorrhage, edema, apoptosis of vascular endothelial cells or tumor cell lines, as well as regulation of platelet aggregation. Effects of snake L-amino oxidases on platelets are controversial, since they either induce aggregation or inhibit agonist-induced aggregation. These different effects are probably due to different experimental conditions. This protein induce hemolysis and has antibacterial and antiparasitic activities (against the Gram-positive S.aureus). Tested in vivo, this protein significantly inhibits Ehrlich ascite tumors growth and induces an influx of polymorphonuclear cells, as well as spontaneous liberation of hydrogen peroxide from peritoneal macrophages. This is L-amino-acid oxidase from Bothrops jararaca (Jararaca).